Consider the following 1007-residue polypeptide: MRLLPVWTAALLAAQAAGVALTHKLNGFTITEHPDAEKRELLQKYVTWDDKSLFINGERIMIFGAEIHPWRLPVPSLWRDILQKVKALGFNCVSFYVDWALLEGKPGEYRAEGSFAWEPFFDAASDLGIYLIARPGPYINAEASGGGFPGWLQRLNGTIRSSDQSYLDATENYVSHIGGLIAKYQITNGGPVILYQPDNEYSGGCCGQEFPNPDYFQYVIDQARRAGIVVPTISNDAWPGGHNAPGTGKGEVDIYGHDNYPLGFDCANPDVWPEGNLPTDYRDLHLEISPSTPYALVEYQVGAFDPWGGPGFEQCAALTGYEFERVFHKNTFSFGVGILSLYMTFGGTNWGNLGHPGGYTSYDYGSPIKETREITREKYSELKLLGNFIKSSPGYLLATPGKLTNTTYTNTADLTVTPLLGNGTGSFFVLRHSDYSSQASTPYKLRLPTSAGQLTIPQLGGSLVLNGRDSKVHLVDYDVAGTKILYSTAEVFTWKKFHDGKVLVLYGGPGEHHELAVSSKAKVKVVEGLGSGISSKQIRGAVVVAWDVEPARRIVQIGDLKIFLLDRNSAYNYWVPQLGTETSIPYATEKAVAASVIVKAGYLVRTAYVKGRDLHLTADFNATTPVEVIGAPKTAENLFINGKKAHHTVDKNGIWSTEVGYSPPKIVLPVLEDLKWKSIDTLPEIQPSYDDSPWPDANLPTKNTIYPLRTPTSLYASDYGFHTGYLLFRGHFTANGRESNFSIQTQGGQAFGSSVWLSGTYLGSWTGDNDYQDYNATYTLPSLKAGKEYVFTVVVDNMGLNENWIVGQDEMKKPRGILNYELSGHEASDITWKLTGNFGGEDYVDKVRGPLNEGGLYAERHGYHQPYPPTKSKDWKSSTPLTGLSKPGISFYTASFDLDIKSGWDVPIYFEFGNSTTPAPAYRVQLYVNGWQYGKYVNNIGPQTRFPVPEGILNYKGTNWVAVTLWALEGSGAKLDSFKLVHGIPVRTALDVEGVELPRYQSRKGVY.

The N-terminal stretch at 1 to 18 is a signal peptide; sequence MRLLPVWTAALLAAQAAG. The substrate site is built by tyrosine 96, asparagine 140, alanine 141, and glutamate 142. An N-linked (GlcNAc...) asparagine glycan is attached at asparagine 156. Residue asparagine 199 participates in substrate binding. Glutamate 200 serves as the catalytic Proton donor. Cysteine 205 and cysteine 206 are disulfide-bonded. A substrate-binding site is contributed by tyrosine 260. A disulfide bridge connects residues cysteine 266 and cysteine 315. The active-site Nucleophile is glutamate 298. A substrate-binding site is contributed by tyrosine 364. Asparagine 405, asparagine 422, asparagine 621, asparagine 740, asparagine 775, and asparagine 914 each carry an N-linked (GlcNAc...) asparagine glycan.

This sequence belongs to the glycosyl hydrolase 35 family.

It is found in the secreted. It carries out the reaction Hydrolysis of terminal non-reducing beta-D-galactose residues in beta-D-galactosides.. In terms of biological role, cleaves beta-linked terminal galactosyl residues from gangliosides, glycoproteins, and glycosaminoglycans. The sequence is that of Probable beta-galactosidase A (lacA) from Emericella nidulans (strain FGSC A4 / ATCC 38163 / CBS 112.46 / NRRL 194 / M139) (Aspergillus nidulans).